Reading from the N-terminus, the 356-residue chain is MADFFAMPLWTDFLWPLIVMVAQSVLLLVVLLIAIAYILLADRKIWAAVQIRRGPNVVGPWGLFQSFADLLKFVLKEPIIPSGANKGVFLLAPLVSCVLALAAWAVIPVNLNWVIADINVGILYIFAISSLSIYGIIMGGWASNSKYPFLAALRSAAQMVSYEVSIGFVIITVLLCAGSLNLSAIVEAQHTSGLATLIGLPWLTFLNWYWLPLLPMFVVFYVSALAETNRPPFDLVEAESELVAGFMVEYGSTPYLLFMLGEYVAITTMCAMGAILFMGGWLPPVDLPPFNWVPGVIWFSLKLFFMFFLIAMAKAIVPRYRYDQLMRLGWKVFLPLSLAMVVIVAAVLQFAGIAPK.

Transmembrane regions (helical) follow at residues 18 to 38 (IVMVAQSVLLLVVLLIAIAYI), 87 to 107 (GVFLLAPLVSCVLALAAWAVI), 120 to 140 (VGILYIFAISSLSIYGIIMGG), 166 to 186 (IGFVIITVLLCAGSLNLSAIV), 202 to 222 (WLTFLNWYWLPLLPMFVVFYV), 257 to 277 (LFMLGEYVAITTMCAMGAILF), 292 to 312 (WVPGVIWFSLKLFFMFFLIAM), and 333 to 353 (FLPLSLAMVVIVAAVLQFAGI).

It belongs to the complex I subunit 1 family. NDH-1 is composed of 14 different subunits. Subunits NuoA, H, J, K, L, M, N constitute the membrane sector of the complex.

The protein resides in the cell inner membrane. The enzyme catalyses a quinone + NADH + 5 H(+)(in) = a quinol + NAD(+) + 4 H(+)(out). NDH-1 shuttles electrons from NADH, via FMN and iron-sulfur (Fe-S) centers, to quinones in the respiratory chain. The immediate electron acceptor for the enzyme in this species is believed to be ubiquinone. Couples the redox reaction to proton translocation (for every two electrons transferred, four hydrogen ions are translocated across the cytoplasmic membrane), and thus conserves the redox energy in a proton gradient. This subunit may bind ubiquinone. The chain is NADH-quinone oxidoreductase subunit H from Nitrobacter winogradskyi (strain ATCC 25391 / DSM 10237 / CIP 104748 / NCIMB 11846 / Nb-255).